Here is a 453-residue protein sequence, read N- to C-terminus: Gastrin/cholecystokinin type B receptor (453 aa).

Topologically, residues 1–57 are extracellular; the sequence is MELLKLNRSAQGSGAGPGASLCRAGGALLNSSGAGNLSCEPPRLRGAGTRELELAIR. Asn7, Asn30, and Asn36 each carry an N-linked (GlcNAc...) asparagine glycan. The chain crosses the membrane as a helical span at residues 58–79; that stretch reads VTLYAVIFLMSVGGNVLIIVVL. At 80–87 the chain is on the cytoplasmic side; sequence GLSRRLRT. A helical membrane pass occupies residues 88–109; that stretch reads VTNAFLLSLAVSDLLLAVACMP. The Extracellular segment spans residues 110–131; that stretch reads FTLLPNLMGTFIFGTVVCKAVS. The cysteines at positions 127 and 206 are disulfide-linked. Residues 132–150 form a helical membrane-spanning segment; that stretch reads YLMGVSVSVSTLSLVAIAL. The Cytoplasmic segment spans residues 151–170; it reads ERYSAICRPLQARVWQTRSH. Residues 171–189 form a helical membrane-spanning segment; the sequence is AARVIIATWMLSGLLMVPY. Residues 190–220 lie on the Extracellular side of the membrane; sequence PVYTAVQPAGGARALQCVHRWPSARVRQTWS. A helical membrane pass occupies residues 221–243; sequence VLLLLLLFFVPGVVMAVAYGLIS. The Cytoplasmic segment spans residues 244–339; the sequence is RELYLGLRFD…KLLAKKRVVR (96 aa). Positions 258 to 286 are disordered; sequence SESRVRSQGGLRGGAGPGPAPPNGSCRPE. The helical transmembrane segment at 340 to 361 threads the bilayer; that stretch reads MLLVIVVLFFLCWLPLYSANTW. Residues 362–379 lie on the Extracellular side of the membrane; it reads RAFDSSGAHRALSGAPIS. A helical membrane pass occupies residues 380 to 400; sequence FIHLLSYASACVNPLVYCFMH. At 401-453 the chain is on the cytoplasmic side; the sequence is RRFRQACLETCARCCPRPPRARPRPLPDEDPPTPSIASLSRLSYTTISTLGPG. Residue Cys414 is the site of S-palmitoyl cysteine attachment. The interval 422-453 is disordered; the sequence is RPRPLPDEDPPTPSIASLSRLSYTTISTLGPG. Over residues 435 to 453 the composition is skewed to polar residues; it reads SIASLSRLSYTTISTLGPG.

The protein belongs to the G-protein coupled receptor 1 family. In terms of tissue distribution, parietal cells, pancreas, brain and various neoplastic tissues.

The protein localises to the cell membrane. Functionally, receptor for gastrin and cholecystokinin. The CCK-B receptors occur throughout the central nervous system where they modulate anxiety, analgesia, arousal, and neuroleptic activity. This receptor mediates its action by association with G proteins that activate a phosphatidylinositol-calcium second messenger system. This Canis lupus familiaris (Dog) protein is Gastrin/cholecystokinin type B receptor (CCKBR).